Reading from the N-terminus, the 216-residue chain is Adenylate kinase (216 aa).

10–15 (GAGKGT) serves as a coordination point for ATP. The interval 30–59 (STGDIFRAAIKNQTPMGVEAKKFIDKGELV) is NMP. AMP-binding positions include threonine 31, arginine 36, 57 to 59 (ELV), 85 to 88 (GFPR), and glutamine 92. Positions 126 to 164 (GRFICRNCGTTYHRLYNPTKVEGTCDVCGGHDFYQRDDD) are LID. An ATP-binding site is contributed by arginine 127. Residues cysteine 130 and cysteine 133 each coordinate Zn(2+). 136–137 (TY) contacts ATP. 2 residues coordinate Zn(2+): cysteine 150 and cysteine 153. AMP is bound by residues arginine 161 and arginine 172. Glutamine 200 contributes to the ATP binding site.

It belongs to the adenylate kinase family. Monomer.

The protein localises to the cytoplasm. The enzyme catalyses AMP + ATP = 2 ADP. The protein operates within purine metabolism; AMP biosynthesis via salvage pathway; AMP from ADP: step 1/1. In terms of biological role, catalyzes the reversible transfer of the terminal phosphate group between ATP and AMP. Plays an important role in cellular energy homeostasis and in adenine nucleotide metabolism. This is Adenylate kinase from Limosilactobacillus fermentum (strain NBRC 3956 / LMG 18251) (Lactobacillus fermentum).